The following is a 276-amino-acid chain: NADPH-dependent 7-cyano-7-deazaguanine reductase (276 aa).

Substrate is bound at residue 80–82; that stretch reads VES. 82-83 is a binding site for NADPH; the sequence is SK. The active-site Thioimide intermediate is cysteine 183. Aspartate 190 (proton donor) is an active-site residue. Residue 222–223 coordinates substrate; sequence HE. 251 to 252 provides a ligand contact to NADPH; that stretch reads RG.

The protein belongs to the GTP cyclohydrolase I family. QueF type 2 subfamily. In terms of assembly, homodimer.

The protein localises to the cytoplasm. The enzyme catalyses 7-aminomethyl-7-carbaguanine + 2 NADP(+) = 7-cyano-7-deazaguanine + 2 NADPH + 3 H(+). It participates in tRNA modification; tRNA-queuosine biosynthesis. Functionally, catalyzes the NADPH-dependent reduction of 7-cyano-7-deazaguanine (preQ0) to 7-aminomethyl-7-deazaguanine (preQ1). In Burkholderia cenocepacia (strain HI2424), this protein is NADPH-dependent 7-cyano-7-deazaguanine reductase.